A 598-amino-acid chain; its full sequence is Elongation factor 4 (598 aa).

Residues 2–184 (DNVRNFAIIA…AIITKLPAPQ (183 aa)) form the tr-type G domain. GTP is bound by residues 14-19 (DHGKST) and 131-134 (NKVD).

It belongs to the TRAFAC class translation factor GTPase superfamily. Classic translation factor GTPase family. LepA subfamily.

The protein resides in the cell membrane. It catalyses the reaction GTP + H2O = GDP + phosphate + H(+). Functionally, required for accurate and efficient protein synthesis under certain stress conditions. May act as a fidelity factor of the translation reaction, by catalyzing a one-codon backward translocation of tRNAs on improperly translocated ribosomes. Back-translocation proceeds from a post-translocation (POST) complex to a pre-translocation (PRE) complex, thus giving elongation factor G a second chance to translocate the tRNAs correctly. Binds to ribosomes in a GTP-dependent manner. The polypeptide is Elongation factor 4 (Wolbachia sp. subsp. Brugia malayi (strain TRS)).